A 95-amino-acid chain; its full sequence is Nodulin (95 aa).

This Striga hermonthica (Purple witchweed) protein is Nodulin.